Reading from the N-terminus, the 327-residue chain is Toluene-4-monooxygenase system, hydroxylase component subunit beta (327 aa).

This sequence belongs to the TmoE/XamoE family. The alkene monooxygenase multicomponent enzyme system is composed of an electron transfer component and a monooxygenase component interacting with the effector protein TmoD. The electron transfer component is composed of a ferredoxin reductase (TmoF) and a ferredoxin (TmoC), and the monooxygenase component is formed by a heterohexamer (dimer of heterotrimers) of two alpha subunits (TmoA), two beta subunits (TmoE) and two gamma subunits (TmoB).

The catalysed reaction is toluene + NADH + O2 + H(+) = 4-methylphenol + NAD(+) + H2O. The protein operates within xenobiotic degradation; toluene degradation. Inhibited by Zn(2+) and Cu(2+). In terms of biological role, component of the toluene-4-monooxygenase multicomponent enzyme system which catalyzes the O2- and NADH-dependent hydroxylation of toluene to form p-cresol. Also able to convert benzene to phenol, catechol, and 1,2,3-trihydroxybenzene by successive hydroxylations. The protein is Toluene-4-monooxygenase system, hydroxylase component subunit beta of Ectopseudomonas mendocina (Pseudomonas mendocina).